Reading from the N-terminus, the 704-residue chain is SH3KBP1-binding protein 1 (704 aa).

An N-acetylalanine modification is found at A2. Positions 19–88 (EVIHLNVGGK…LRTKELDPRG (70 aa)) constitute a BTB domain. The disordered stretch occupies residues 145–165 (LVGPQQAGGRPAPVRRSNTMP). Position 163 is a phosphothreonine (T163). WD repeat units follow at residues 233 to 280 (RLDW…GGSE), 283 to 322 (VFHL…WQVQ), 324 to 359 (VQPI…LRMK), 428 to 466 (VHRS…GMIS), and 548 to 586 (LECE…DGLG). The span at 611-644 (ASSRGSLPSPSPRTSLTSLHSAFSNTSLSSRRGS) shows a compositional bias: low complexity. Residues 611–704 (ASSRGSLPSP…PKTKLNETSF (94 aa)) form a disordered region. The PXXXPR motif lies at 618-623 (PSPSPR). 2 positions are modified to phosphoserine: S644 and S646. A PXXXPR motif is present at residues 678–683 (PTPAPR).

The protein belongs to the KCTD3 family. Monomer. Interacts with CUL3; interaction is direct and forms a 5:5 heterodecamer. Interacts (via PXXXPR motifs) with SH3KBP1 (via SH3 domains). Directly interacts with cathepsin B/CTSB.

The protein resides in the lysosome. Inhibits CBL-SH3KBP1 complex mediated down-regulation of EGFR signaling by sequestration of SH3KBP1. Binds to SH3KBP1 and prevents its interaction with CBL and inhibits translocation of SH3KBP1 to EGFR containing vesicles upon EGF stimulation. The polypeptide is SH3KBP1-binding protein 1 (SHKBP1) (Bos taurus (Bovine)).